The following is a 309-amino-acid chain: D-galacturonate reductase (309 aa).

The active-site Proton donor is Y50. H109 lines the substrate pocket. 210–264 (SPLGSTGSPLMSADPVVKIAEKKGISPTTVLLSYHVNRGSTVLAKSVTPARIKAN) serves as a coordination point for NADP(+).

The protein belongs to the aldo/keto reductase family.

It carries out the reaction L-galactonate + NADP(+) = aldehydo-D-galacturonate + NADPH + H(+). Its pathway is carbohydrate acid metabolism. Functionally, mediates the reduction of D-galacturonate to L-galactonate, the first step in D-galacturonate catabolic process. Also has activity with D-glucuronate and DL-glyceraldehyde. No activity is observed with D-glucose, D-fructose, D-xylose, D-galactose, L-arabinose or D-mannose. Activity is seen only with NADPH and not with NADH. This Hypocrea jecorina (Trichoderma reesei) protein is D-galacturonate reductase (gar1).